The chain runs to 395 residues: MFGTVNNYLSGVLHAAQDLDGESLATYLSLRDVHVQNHNLYIAQPEKLVDRFLKPPLDEVVSAHLKVLYHLAQEPPGYMEAYTQQSAACGAVVRLLQQLKDENWCLPLMYRVCLDLRYLAQACEKHCQGFTPGHVLEKAADCIMACFRVCAADGRASEEDTKRLGMMNLVNQLFKIYFRINKLHLCKPLIRAIDNCIFKDSFPLPEQITYKYFVGRRAMFDSNYQAAVQYLSYAFSNCPDRFASNKRLILIYLVPVKMLLGYLPSKSLLQRYDLLLFLDLAMAMKAGNVNRFDEIVRDQELVLIRSGIYLLVEKLKFLVYRNLFKKVFVIRKSHQLDMGDFLSALHFVGLTDVSLDETHCIVANLIYDGKIKGYISHAHNKLVVSKQNPFPSVSL.

Residues 208–389 form the PCI domain; the sequence is ITYKYFVGRR…NKLVVSKQNP (182 aa).

This sequence belongs to the CSN12 family. As to quaternary structure, component of the nuclear pore complex (NPC)-associated TREX-2/AMEX complex (anchoring and mRNA export complex), composed of e(y)2, xmas and PCID2. Interaction between the TREX-2/AMEX complex and the ORC complex is required for ORC localization to mRNPs, and consequently mRNA export. Within the TREX-2/AMEX-ORC complex, interacts with Orc3 and Orc4. Interacts with sbr/NXF1. Interacts with Moe. Interacts with nudC; required to maintain stability in the cytoplasm. Post-translationally, mono- and poly-ubiquitinated.

The protein resides in the nucleus. The protein localises to the cytoplasm. Its subcellular location is the nucleus membrane. It localises to the cytoskeleton. Functionally, required for the export of nuclear mRNAs and involved in mRNA trafficking in the cytoplasm. Component of the nuclear pore complex (NPC)-associated TREX-2/AMEX complex (anchoring and mRNA export complex) which functions in docking export-competent ribonucleoprotein particles (mRNPs) to the nuclear entrance of the nuclear pore complex (nuclear basket), thereby enabling the export of mRNAs to the cytoplasm through the nuclear pores. Within the complex, specifically promotes the association of factors involved in regulating nuclear mRNA export, such as Moe, sbr/NXF1 and the ORC complex, to the mRNPs particles. In the cytoplasm, functions independently of its role in the TREX-2/AMEX complex, to promote cytoplasmic mRNA trafficking together with nudC. Associates with translationally active polysomes. The polypeptide is PCI domain-containing protein 2 homolog (Drosophila melanogaster (Fruit fly)).